A 1048-amino-acid chain; its full sequence is Pleckstrin homology domain-containing family A member 6 (1048 aa).

Polar residues predominate over residues 1 to 22 (MSNKTGGKRPATTNSDIPNHNM). Residues 1–36 (MSNKTGGKRPATTNSDIPNHNMVSEVPPERPSVRAT) are disordered. The PH domain maps to 59-158 (PVTKAGWLFK…WIQAMGEAAR (100 aa)). Disordered regions lie at residues 165–318 (QKSV…MNQL) and 448–467 (SLQPRSHSVPRSPSQGSYSR). The segment covering 201-233 (PEPEAKTRGEGDGRGCEKAERRPERPEVKKEPP) has biased composition (basic and acidic residues). Residues serine 247 and serine 251 each carry the phosphoserine modification. Polar residues predominate over residues 267-290 (AQPNGWQYHSPSRPGSTAFPSQDG). 4 positions are modified to phosphoserine: serine 314, serine 459, serine 461, and serine 472. The segment covering 456–465 (VPRSPSQGSY) has biased composition (polar residues). Tyrosine 492 is modified (phosphotyrosine). A Phosphoserine modification is found at serine 591. The disordered stretch occupies residues 663-746 (RKNNPSRGTD…HQTLPLDTPR (84 aa)). A compositionally biased stretch (low complexity) spans 687–711 (SSNSPASPLSSASLTSPLSPFSLVS). A compositionally biased stretch (polar residues) spans 712 to 721 (GSQGSPTKPG). Threonine 744 bears the Phosphothreonine mark. At serine 777 the chain carries Phosphoserine. A Phosphothreonine modification is found at threonine 784. The interval 793-858 (ASGLTNGLSS…PAPDPSPRPA (66 aa)) is disordered. The segment covering 794 to 803 (SGLTNGLSSQ) has biased composition (polar residues). Serine 801 is subject to Phosphoserine. Basic and acidic residues predominate over residues 815–827 (GKVKMSVEEQIDR). Basic residues predominate over residues 828–842 (MRRHQSGSMREKRRS). Phosphoserine occurs at positions 848, 854, and 867. Threonine 920 carries the phosphothreonine modification. Serine 940 bears the Phosphoserine mark. Disordered regions lie at residues 968–989 (PIGEGDSVDVPQDSESQLQEQE) and 1005–1048 (RGRM…TMRV). At threonine 1015 the chain carries Phosphothreonine. A compositionally biased stretch (pro residues) spans 1016 to 1030 (PSPPTSPASPAPPAN). Serine 1017 is subject to Phosphoserine. Threonine 1020 is subject to Phosphothreonine. Serine 1021 and serine 1024 each carry phosphoserine.

Highly expressed in heart, kidney and throughout the brain.

The polypeptide is Pleckstrin homology domain-containing family A member 6 (PLEKHA6) (Homo sapiens (Human)).